The following is a 250-amino-acid chain: Cyclopentanol dehydrogenase (250 aa).

NAD(+)-binding residues include Met18, Asp37, Asp63, Val64, Asn90, Tyr155, Lys159, Ile188, Thr190, and Thr193. Residue Tyr155 is the Proton acceptor of the active site.

It belongs to the short-chain dehydrogenases/reductases (SDR) family.

The enzyme catalyses cyclopentanol + NAD(+) = cyclopentanone + NADH + H(+). It catalyses the reaction cyclohexanol + NAD(+) = cyclohexanone + NADH + H(+). The protein operates within alcohol metabolism; cyclopentanol degradation; 5-valerolactone from cyclopentanol: step 1/2. Its function is as follows. Catalyzes the oxidation of cyclopentanol to cyclopentanone and cyclohexanol to cyclohexanone. The activity toward cyclohexanol is 60% that of cyclopentanol. This is Cyclopentanol dehydrogenase from Comamonas sp. (strain NCIMB 9872).